Reading from the N-terminus, the 143-residue chain is Transcriptional regulator MraZ (143 aa).

2 consecutive SpoVT-AbrB domains span residues 5–47 (TYAP…SQRE) and 76–119 (ASAE…DAEA).

Belongs to the MraZ family. Forms oligomers.

The protein resides in the cytoplasm. It localises to the nucleoid. This is Transcriptional regulator MraZ from Leifsonia xyli subsp. xyli (strain CTCB07).